We begin with the raw amino-acid sequence, 115 residues long: Large ribosomal subunit protein uL22 (115 aa).

Belongs to the universal ribosomal protein uL22 family. As to quaternary structure, part of the 50S ribosomal subunit.

Its function is as follows. This protein binds specifically to 23S rRNA; its binding is stimulated by other ribosomal proteins, e.g. L4, L17, and L20. It is important during the early stages of 50S assembly. It makes multiple contacts with different domains of the 23S rRNA in the assembled 50S subunit and ribosome. The globular domain of the protein is located near the polypeptide exit tunnel on the outside of the subunit, while an extended beta-hairpin is found that lines the wall of the exit tunnel in the center of the 70S ribosome. The chain is Large ribosomal subunit protein uL22 from Nitrosospira multiformis (strain ATCC 25196 / NCIMB 11849 / C 71).